Reading from the N-terminus, the 487-residue chain is NADH-quinone oxidoreductase subunit N (487 aa).

14 helical membrane-spanning segments follow: residues 16–36 (VIMP…VNVF), 45–65 (LAWL…TGWG), 79–99 (NFAI…VLIS), 111–131 (GELY…AAAT), 133–153 (LMTI…LAGF), 168–188 (FLLG…IYGV), 212–232 (LLIG…AAPF), 257–276 (AAGF…AMIA), 281–298 (LLWI…FTAL), 306–326 (MLAY…ASGT), 333–353 (ILFY…VIVL), 378–398 (ALAM…AGFI), 413–435 (IWLA…RVIV), and 457–477 (LALV…SMIL).

Belongs to the complex I subunit 2 family. As to quaternary structure, NDH-1 is composed of 14 different subunits. Subunits NuoA, H, J, K, L, M, N constitute the membrane sector of the complex.

It localises to the cell inner membrane. The catalysed reaction is a quinone + NADH + 5 H(+)(in) = a quinol + NAD(+) + 4 H(+)(out). NDH-1 shuttles electrons from NADH, via FMN and iron-sulfur (Fe-S) centers, to quinones in the respiratory chain. The immediate electron acceptor for the enzyme in this species is believed to be ubiquinone. Couples the redox reaction to proton translocation (for every two electrons transferred, four hydrogen ions are translocated across the cytoplasmic membrane), and thus conserves the redox energy in a proton gradient. In Trichlorobacter lovleyi (strain ATCC BAA-1151 / DSM 17278 / SZ) (Geobacter lovleyi), this protein is NADH-quinone oxidoreductase subunit N.